Consider the following 429-residue polypeptide: C4-dicarboxylate transport protein (429 aa).

8 helical membrane-spanning segments follow: residues 3–23, 44–64, 76–96, 142–162, 184–204, 222–242, 326–346, and 352–372; these read LTIF…GVLL, LIKM…IAGM, IALL…LLIV, IGAF…LFGF, VIFG…FGAM, LIAC…GSIA, VIHQ…AAGV, and IVLA…LALI.

This sequence belongs to the dicarboxylate/amino acid:cation symporter (DAACS) (TC 2.A.23) family.

It localises to the cell inner membrane. In terms of biological role, responsible for the transport of dicarboxylates such as succinate, fumarate, and malate from the periplasm across the membrane. The chain is C4-dicarboxylate transport protein from Serratia proteamaculans (strain 568).